The chain runs to 234 residues: Endonuclease V (234 aa).

2 residues coordinate Mg(2+): Asp46 and Asp116.

It belongs to the endonuclease V family. Mg(2+) is required as a cofactor.

The protein localises to the cytoplasm. The catalysed reaction is Endonucleolytic cleavage at apurinic or apyrimidinic sites to products with a 5'-phosphate.. Its function is as follows. DNA repair enzyme involved in the repair of deaminated bases. Selectively cleaves double-stranded DNA at the second phosphodiester bond 3' to a deoxyinosine leaving behind the intact lesion on the nicked DNA. The polypeptide is Endonuclease V (Clostridium acetobutylicum (strain ATCC 824 / DSM 792 / JCM 1419 / IAM 19013 / LMG 5710 / NBRC 13948 / NRRL B-527 / VKM B-1787 / 2291 / W)).